The chain runs to 158 residues: Serglycin (158 aa).

The first 27 residues, 1–27 (MMQKLLKCSRLVLALALILVLESSVQG), serve as a signal peptide directing secretion. The cysteines at positions 40 and 49 are disulfide-linked. O-linked (Xyl...) (glycosaminoglycan) serine glycosylation is found at Ser-94 and Ser-96. 9 tandem repeats follow at residues 94–95 (SG), 96–97 (SG), 98–99 (FG), 100–101 (SG), 102–103 (SG), 104–105 (SG), 106–107 (SG), 108–109 (SG), and 110–111 (SG). The interval 94–111 (SGSGFGSGSGSGSGSGSG) is 9 X 2 AA tandem repeats of [SF]-G. O-linked (Xyl...) (glycosaminoglycan) serine glycans are attached at residues Ser-100, Ser-102, Ser-104, Ser-106, Ser-108, and Ser-110. Residues 134–158 (RSLDRNLPSDSQDLGQHGLEEDFML) form a disordered region.

Belongs to the serglycin family. As to quaternary structure, binds to activated CD44 and to GZMB. O-glycosylated; contains chondroitin sulfate and heparan sulfate.

The protein localises to the cytoplasmic granule. It is found in the cytolytic granule. The protein resides in the secreted. It localises to the extracellular space. Its subcellular location is the golgi apparatus. In terms of biological role, plays a role in formation of mast cell secretory granules and mediates storage of various compounds in secretory vesicles. Required for storage of some proteases in both connective tissue and mucosal mast cells and for storage of granzyme B in T-lymphocytes. Plays a role in localizing neutrophil elastase in azurophil granules of neutrophils. Mediates processing of MMP2. Plays a role in cytotoxic cell granule-mediated apoptosis by forming a complex with granzyme B which is delivered to cells by perforin to induce apoptosis. Regulates the secretion of TNF-alpha and may also regulate protease secretion. Inhibits bone mineralization. This Homo sapiens (Human) protein is Serglycin (SRGN).